We begin with the raw amino-acid sequence, 923 residues long: Immunomodulating metalloprotease (923 aa).

Residues 1–41 (MSLSTTAFPSLQGENMSRSPIPRHRALLAGFCLAGALSAQA) form the signal peptide. Residues 450–794 (QGFTAIGRMA…FYTQWVHYWA (345 aa)) enclose the Peptidase M60 domain. Histidine 696 serves as a coordination point for Zn(2+). Glutamate 697 is an active-site residue. Histidine 700 contributes to the Zn(2+) binding site.

It belongs to the peptidase M88 family. The cofactor is Zn(2+).

Its subcellular location is the secreted. Its activity is regulated as follows. Proteolytic activity is blocked in the presence of EDTA. Functionally, protease that degrades several proteins of the host immune system. Cleaves P-selectin glycoprotein ligand-1 (PSGL-1), leading to its functional inhibition; PSGL-1 is a leukocyte cell-surface receptor essential for leukocyte recruitment to the site of infection. Next to PSGL-1, targets host CD43 and CD44 that are also involved in leukocyte homing. Thus, prevents neutrophil extravasation and thereby protects P.aeruginosa from neutrophil attack. Is also able to inhibit the decay accelerating factor (CD55), but not the cell-surface receptors CD46 and CD31. In Pseudomonas aeruginosa (strain ATCC 15692 / DSM 22644 / CIP 104116 / JCM 14847 / LMG 12228 / 1C / PRS 101 / PAO1), this protein is Immunomodulating metalloprotease.